Reading from the N-terminus, the 231-residue chain is tRNA (guanine-N(1)-)-methyltransferase (231 aa).

Residues G112 and 132-137 each bind S-adenosyl-L-methionine; that span reads LGDFVL.

It belongs to the RNA methyltransferase TrmD family. As to quaternary structure, homodimer.

The protein localises to the cytoplasm. The enzyme catalyses guanosine(37) in tRNA + S-adenosyl-L-methionine = N(1)-methylguanosine(37) in tRNA + S-adenosyl-L-homocysteine + H(+). In terms of biological role, specifically methylates guanosine-37 in various tRNAs. The protein is tRNA (guanine-N(1)-)-methyltransferase of Gloeothece citriformis (strain PCC 7424) (Cyanothece sp. (strain PCC 7424)).